Here is a 261-residue protein sequence, read N- to C-terminus: Succinate dehydrogenase iron-sulfur subunit (261 aa).

The 92-residue stretch at 28–119 (RKVQVYRYDP…DIKIYPLPHM (92 aa)) folds into the 2Fe-2S ferredoxin-type domain. Cys-80, Cys-85, and Cys-100 together coordinate [2Fe-2S] cluster. Positions 161–191 (DREKLDGLYECILCACCSTSCPSYWWNSDKY) constitute a 4Fe-4S ferredoxin-type domain. Positions 171, 174, and 177 each coordinate [4Fe-4S] cluster. Cys-181 lines the [3Fe-4S] cluster pocket. Trp-186 is an a ubiquinone binding site. Cys-228 and Cys-234 together coordinate [3Fe-4S] cluster. [4Fe-4S] cluster is bound at residue Cys-238.

The protein belongs to the succinate dehydrogenase/fumarate reductase iron-sulfur protein family. Part of an enzyme complex containing four subunits: a flavoprotein, an iron-sulfur, cytochrome b-556, and a hydrophobic anchor protein. It depends on [2Fe-2S] cluster as a cofactor. The cofactor is [3Fe-4S] cluster. [4Fe-4S] cluster serves as cofactor.

It catalyses the reaction a quinone + succinate = fumarate + a quinol. It functions in the pathway carbohydrate metabolism; tricarboxylic acid cycle; fumarate from succinate (bacterial route): step 1/1. This is Succinate dehydrogenase iron-sulfur subunit (sdhB) from Rickettsia typhi (strain ATCC VR-144 / Wilmington).